Reading from the N-terminus, the 476-residue chain is Protein transport protein Sec61 subunit alpha-like 1 (476 aa).

Residues Ala-2–Leu-33 lie on the Cytoplasmic side of the membrane. The helical transmembrane segment at Trp-34–Ile-53 threads the bilayer. At Met-54 to Leu-76 the chain is on the lumenal side. The chain crosses the membrane as a helical span at residues Met-77–Gly-96. The Cytoplasmic portion of the chain corresponds to Ala-97–Lys-117. Residues Leu-118–Gly-138 form a helical membrane-spanning segment. The Lumenal segment spans residues Asp-139–Gly-144. The chain crosses the membrane as a helical span at residues Ala-145 to Leu-165. Over Asp-166–Gly-172 the chain is Cytoplasmic. Residues Tyr-173–Trp-193 traverse the membrane as a helical segment. The Lumenal portion of the chain corresponds to Lys-194–Pro-240. Residues Asn-241–Phe-261 form a helical membrane-spanning segment. The Cytoplasmic segment spans residues Arg-262 to Asn-288. The helical transmembrane segment at Ile-289–Ser-309 threads the bilayer. The Lumenal portion of the chain corresponds to Thr-310–Val-354. A helical membrane pass occupies residues Leu-355–Phe-375. Residues Ser-376–Ala-420 lie on the Cytoplasmic side of the membrane. Residues Ala-421–Ile-441 form a helical membrane-spanning segment. Over Gly-442 to Thr-445 the chain is Lumenal. A helical membrane pass occupies residues Gly-446–Val-462. Residues Lys-463 to Phe-476 are Cytoplasmic-facing.

It belongs to the SecY/SEC61-alpha family. As to quaternary structure, the SEC61 channel-forming translocon complex consists of channel-forming core components SEC61A1, SEC61B and SEC61G and different auxiliary components such as SEC62 and SEC63. The SEC61 channel associates with the multi-pass translocon (MPT) complex.

The protein localises to the endoplasmic reticulum membrane. Functionally, component of SEC61 channel-forming translocon complex that mediates transport of signal peptide-containing precursor polypeptides across the endoplasmic reticulum (ER). Forms a ribosome receptor and a gated pore in the ER membrane, both functions required for cotranslational translocation of nascent polypeptides. May cooperate with auxiliary protein SEC62, SEC63 and HSPA5/BiP to enable post-translational transport of small presecretory proteins. The SEC61 channel is also involved in ER membrane insertion of transmembrane proteins: it mediates membrane insertion of the first few transmembrane segments of proteins, while insertion of subsequent transmembrane regions of multi-pass membrane proteins is mediated by the multi-pass translocon (MPT) complex. Plays a role in the pronephric kidney tubule development. The sequence is that of Protein transport protein Sec61 subunit alpha-like 1 (sec61al1) from Danio rerio (Zebrafish).